We begin with the raw amino-acid sequence, 2060 residues long: MDSFFPEGARVWLRENGQHFPSTVNSCAEGVVVFQTDYGQVFTYKQSTITNQKVTAMHPLHEEGVDDMASLTELHGGSIMYNLFQRYKRNQIYTYIGSIIASVNPYQPIAGLYERATMEQYSRCHLGELPPHIFAIANECYRCLWKRHDNQCVLISGESGAGKTESTKLILKFLSVISQHSLDLCLQEKSSSVEQAILQSSPIMEAFGNAKTVYNNNSSRFGKFVQLNICQKGNIQGGRIVDYLLEKNRVVRQNPGERNYHIFYALLAGLDQGEREEFYLSLPENYHYLNQSGCTEDKTISDQESFRQVIEAMEVMQFSKEEVREVLRLLAGILHLGNIEFITAGGAQISFKTALGRSAELLGLDPTQLTDALTQRSMFLRGEEILTPLSVQQAVDSRDSLAMALYARCFEWVIKKINSRIKGKDDFKSIGILDIFGFENFEVNHFEQFNINYANEKLQEYFNKHIFSLEQLEYSREGLVWEDIDWIDNGECLDLIEKKLGLLALINEESHFPQATDSTLLEKLHNQHANNHFYVKPRVAVNNFGVKHYAGEVQYDVRGILEKNRDTFRDDLLNLLRESRFDFIYDLFEHISSRNNQDTLKCGSKHRRPTVSSQFKDSLHSLMATLSSSNPFFVRCIKPNTQKMPDQFDQAVVLNQLRYSGMLETVRIRKAGYAVRRPFQDFYKRYKVLMRDLALPEDIRGKCTVLLQFYDASNSEWQLGKTKVFLRESLEQKLEKRREEEIDRAAMVIRAHILGYLARKQYRKVLCGVVTIQKNYRAFLARKRFLHLKKAAIVFQKQLRGRLARKVYRQLLAEKRELEERKRLEEEKKREEEERERKRAQREADLLRAQQEAETRKQQELEALQKNQREADLTRELEKQRENKQVEEILRLEKEIEDLQRMKEQQELSLTEASLQKLQQLRDEELRRLEDEACRAAQEFLESLNFDEIDECVRNIERSLSVGSEISGELSELAENASGEKPNFNFSQPYPEEEVDEGFEADDDAFKDSPNPSEHGHSDQRTSGIRTSDDSSEEDPYMNYTVVPTSPSADSTVLLAASVQDSASLHNSSSGESTYCMPQNNGDLPSPDGDYDYDQDDYEDGAITSGSSVTFSNSYGSQWSPDYRYSVGTYNSSGAYRFSSEGAQSSFEDSEEDFDSRFDTDDELSYRRDSVYSCVTLPYFHSFLYMKGGLMNSWKRRWCVLKDETFLWFRSKQEALKQGWLHKKGGGSSTLSRRNWKKRWFVLRQSKLMYFENDSEEKLKGTVEVRSAKEIIDNTNKENGIDIIMADRTFHLIAESPEDASQWFSVLSQVHSSTDQEIREMHDEQANPQNAVGTLDVGLIDSVCASDSPDRPNSFVIITANRVLHCNADTPEEMHHWITLLQRSKGDTRVEGQEFIVRGWLHKEVKNSPKMSSLKLKKRWFVLTHNSLDYYKSSEKNALKLGTLVLNSLCSVVPPDEKIFKETGYWNVTVYGRKHCYRLYTKLLNEATRWSSAIQNVTDTKAPIDTPTQQLIQDIKENCLNSDVVEQIYKRNPILRYTHHPLHSPLLPLPYGDINLNLLKDKGYTTLQDEAIKIFNSLQQLESMSDPIPIIQGILQTGHDLRPLRDELYCQLIKQTNKVPHPGSVGNLYSWQILTCLSCTFLPSRGILKYLKFHLKRIREQFPGTEMEKYALFIYESLKKTKCREFVPSRDEIEALIHRQEMTSTVYCHGGGSCKITINSHTTAGEVVEKLIRGLAMEDSRNMFALFEYNGQVDKAIESRTIVADVLAKFEKLAATSEAGDAPWKFYFKLYCFLDTDSMPKDSVEFAFMFEQAHEAVIHGHHPAPEESLQVLAALRLQYLQGDYTLHTSVPPLEEVYSLQRLKARISQSTKTFTPYERLEKRRTSFLEGTLRRSFRTGTVARQKVEEEQMLDMWIKEEICSARASIIDKWKKLQGVSQEQAMAKYMALIKEWPGYGSTLFDVECKEGGFPQELWLGVSADAVSVYKRGEGKPLEVFQYEHILSFGAPLANTYKIVVDERELLFETSEVVDVAKLMKAYISMIVKKRYSTTRSLSSQGSSR.

Methionine 1 bears the N-acetylmethionine mark. The region spanning 63-739 (EGVDDMASLT…LEQKLEKRRE (677 aa)) is the Myosin motor domain. Residues asparagine 104, tyrosine 113, 160-165 (GAGKTE), and asparagine 215 each bind ATP. Residues 619-641 (LHSLMATLSSSNPFFVRCIKPNT) are actin-binding. 3 IQ domains span residues 742–771 (IDRA…GVVT), 765–794 (VLCG…AAIV), and 788–817 (LKKA…EKRE). An SAH region spans residues 814–882 (EKRELEERKR…LTRELEKQRE (69 aa)). The stretch at 883 to 933 (NKQVEEILRLEKEIEDLQRMKEQQELSLTEASLQKLQQLRDEELRRLEDEA) forms a coiled coil. A phosphoserine mark is found at serine 961, serine 964, and serine 967. Disordered stretches follow at residues 971–1039 (SELA…PYMN) and 1064–1088 (SLHN…PSPD). Positions 991–1005 (PEEEVDEGFEADDDA) are enriched in acidic residues. A compositionally biased stretch (polar residues) spans 1064–1083 (SLHNSSSGESTYCMPQNNGD). Position 1160 is a phosphothreonine (threonine 1160). PH domains lie at 1214 to 1312 (EALK…QVHS) and 1394 to 1499 (EFIV…NVTD). The MyTH4 domain maps to 1549-1697 (LPYGDINLNL…PSRDEIEALI (149 aa)). Positions 1702–2046 (MTSTVYCHGG…AYISMIVKKR (345 aa)) constitute an FERM domain.

It belongs to the TRAFAC class myosin-kinesin ATPase superfamily. Myosin family. Monomer, when in an inactive conformation in the cytosol. Homodimer in its active, membrane-bound conformation; antiparallel coiled coil-mediated dimer formation. Interacts with ECPAS. Interacts with DCC and ITGB5; the presence of DCC inhibits ITGB5 binding. Interacts with tubulin; ITGB5 or DCC binding inhibits tubulin binding. Interacts strongly with CALM3 and weakly with CALM, the CALM3 interaction is essential for function in filopodial extension and motility. Interacts with ITGB1, ITGB3 and ITGB5. Interacts with NEO1. Interacts with VASP.

It localises to the cytoplasm. The protein localises to the cytosol. Its subcellular location is the cell projection. The protein resides in the lamellipodium. It is found in the ruffle. It localises to the cytoskeleton. The protein localises to the filopodium tip. Its subcellular location is the cell cortex. The protein resides in the filopodium membrane. It is found in the cell membrane. Myosins are actin-based motor molecules with ATPase activity. Unconventional myosins serve in intracellular movements. MYO10 binds to actin filaments and actin bundles and functions as a plus end-directed motor. Moves with higher velocity and takes larger steps on actin bundles than on single actin filaments. The tail domain binds to membranous compartments containing phosphatidylinositol 3,4,5-trisphosphate or integrins, and mediates cargo transport along actin filaments. Regulates cell shape, cell spreading and cell adhesion. Stimulates the formation and elongation of filopodia. In hippocampal neurons it induces the formation of dendritic filopodia by trafficking the actin-remodeling protein VASP to the tips of filopodia, where it promotes actin elongation. Plays a role in formation of the podosome belt in osteoclasts. The protein is Unconventional myosin-X (Myo10) of Rattus norvegicus (Rat).